The sequence spans 365 residues: 2-aminoethylphosphonate--pyruvate transaminase (365 aa).

Lys194 is subject to N6-(pyridoxal phosphate)lysine.

It belongs to the class-V pyridoxal-phosphate-dependent aminotransferase family. PhnW subfamily. Homodimer. It depends on pyridoxal 5'-phosphate as a cofactor.

It carries out the reaction (2-aminoethyl)phosphonate + pyruvate = phosphonoacetaldehyde + L-alanine. Functionally, involved in phosphonate degradation. The protein is 2-aminoethylphosphonate--pyruvate transaminase of Bacillus cereus (strain 03BB102).